A 216-amino-acid chain; its full sequence is GTP:AMP phosphotransferase, mitochondrial (216 aa).

15–20 (GSGKGT) provides a ligand contact to GTP. The NMPbind stretch occupies residues 35–64 (STGDILRQNIIKNTELGKKAKQYIAEGKLV). Residues threonine 36, arginine 41, 62–64 (KLV), 89–92 (GFPR), and glutamine 96 contribute to the AMP site. Residues 125–162 (NRWIHAPSGRVYNIGFKNPKVPGKDDVTGEPLMQREDD) are LID. GTP contacts are provided by residues arginine 126 and 135 to 136 (VY). Residues arginine 159 and arginine 170 each coordinate AMP. Threonine 199 contributes to the GTP binding site.

It belongs to the adenylate kinase family. AK3 subfamily. Monomer. In terms of tissue distribution, ubiquitously expressed with highest levels expressed in the abdomen, suggesting a function in muscle tissues.

Its subcellular location is the mitochondrion matrix. It catalyses the reaction a ribonucleoside 5'-triphosphate + AMP = a ribonucleoside 5'-diphosphate + ADP. In terms of biological role, involved in maintaining the homeostasis of cellular nucleotides by catalyzing the interconversion of nucleoside phosphates. Has GTP:AMP phosphotransferase and ITP:AMP phosphotransferase activities. The polypeptide is GTP:AMP phosphotransferase, mitochondrial (Drosophila melanogaster (Fruit fly)).